We begin with the raw amino-acid sequence, 245 residues long: Uridylate kinase (245 aa).

12-15 (KLSG) contributes to the ATP binding site. Residues 20–25 (GEKGVG) are involved in allosteric activation by GTP. UMP is bound at residue glycine 54. 2 residues coordinate ATP: glycine 55 and arginine 59. UMP contacts are provided by residues aspartate 74 and 135–142 (VGSPYFST). 3 residues coordinate ATP: asparagine 163, tyrosine 169, and aspartate 172.

It belongs to the UMP kinase family. In terms of assembly, homohexamer.

It localises to the cytoplasm. It catalyses the reaction UMP + ATP = UDP + ADP. It participates in pyrimidine metabolism; CTP biosynthesis via de novo pathway; UDP from UMP (UMPK route): step 1/1. Its activity is regulated as follows. Allosterically activated by GTP. Inhibited by UTP. Functionally, catalyzes the reversible phosphorylation of UMP to UDP. The protein is Uridylate kinase of Streptococcus mutans serotype c (strain ATCC 700610 / UA159).